The primary structure comprises 332 residues: Glycerol-3-phosphate dehydrogenase [NAD(P)+] (332 aa).

NADPH contacts are provided by W11, R30, and K108. Sn-glycerol 3-phosphate is bound by residues K108, G137, and S139. Position 141 (A141) interacts with NADPH. Sn-glycerol 3-phosphate contacts are provided by K192, D245, S255, R256, and N257. Residue K192 is the Proton acceptor of the active site. R256 provides a ligand contact to NADPH. NADPH-binding residues include V280 and E282.

The protein belongs to the NAD-dependent glycerol-3-phosphate dehydrogenase family.

The protein resides in the cytoplasm. The enzyme catalyses sn-glycerol 3-phosphate + NAD(+) = dihydroxyacetone phosphate + NADH + H(+). It catalyses the reaction sn-glycerol 3-phosphate + NADP(+) = dihydroxyacetone phosphate + NADPH + H(+). It participates in membrane lipid metabolism; glycerophospholipid metabolism. Its function is as follows. Catalyzes the reduction of the glycolytic intermediate dihydroxyacetone phosphate (DHAP) to sn-glycerol 3-phosphate (G3P), the key precursor for phospholipid synthesis. This Burkholderia mallei (strain ATCC 23344) protein is Glycerol-3-phosphate dehydrogenase [NAD(P)+].